A 504-amino-acid polypeptide reads, in one-letter code: Probable alpha-L-arabinofuranosidase C (504 aa).

4 N-linked (GlcNAc...) asparagine glycosylation sites follow: Asn-152, Asn-181, Asn-269, and Asn-467.

Belongs to the glycosyl hydrolase 51 family.

The protein localises to the secreted. It catalyses the reaction Hydrolysis of terminal non-reducing alpha-L-arabinofuranoside residues in alpha-L-arabinosides.. It functions in the pathway glycan metabolism; L-arabinan degradation. Functionally, alpha-L-arabinofuranosidase involved in the degradation of arabinoxylan, a major component of plant hemicellulose. Acts only on small linear 1,5-alpha-linked L-arabinofuranosyl oligosaccharides. This Aspergillus terreus (strain NIH 2624 / FGSC A1156) protein is Probable alpha-L-arabinofuranosidase C (abfC).